Consider the following 156-residue polypeptide: Large ribosomal subunit protein uL30 (156 aa).

It belongs to the universal ribosomal protein uL30 family. In terms of assembly, part of the 50S ribosomal subunit.

The polypeptide is Large ribosomal subunit protein uL30 (Sulfolobus acidocaldarius (strain ATCC 33909 / DSM 639 / JCM 8929 / NBRC 15157 / NCIMB 11770)).